The primary structure comprises 109 residues: uncharacterized protein (109 aa).

2 helical membrane passes run 18–38 and 48–68; these read TTLA…LLTL and AGLI…VIAL.

The protein resides in the cell membrane. This is an uncharacterized protein from Mycobacterium tuberculosis (strain CDC 1551 / Oshkosh).